A 302-amino-acid polypeptide reads, in one-letter code: Homoserine O-acetyltransferase (302 aa).

C142 (acyl-thioester intermediate) is an active-site residue. Substrate is bound by residues K163 and S192. H235 (proton acceptor) is an active-site residue. E237 is an active-site residue. R249 contacts substrate.

This sequence belongs to the MetA family.

It is found in the cytoplasm. It carries out the reaction L-homoserine + acetyl-CoA = O-acetyl-L-homoserine + CoA. Its pathway is amino-acid biosynthesis; L-methionine biosynthesis via de novo pathway; O-acetyl-L-homoserine from L-homoserine: step 1/1. In terms of biological role, transfers an acetyl group from acetyl-CoA to L-homoserine, forming acetyl-L-homoserine. The polypeptide is Homoserine O-acetyltransferase (Geobacillus kaustophilus).